Here is a 324-residue protein sequence, read N- to C-terminus: Glyoxylate/hydroxypyruvate reductase B (324 aa).

Catalysis depends on residues Arg237 and Glu266. His285 functions as the Proton donor in the catalytic mechanism.

This sequence belongs to the D-isomer specific 2-hydroxyacid dehydrogenase family. GhrB subfamily. As to quaternary structure, homodimer.

It is found in the cytoplasm. The enzyme catalyses glycolate + NADP(+) = glyoxylate + NADPH + H(+). The catalysed reaction is (R)-glycerate + NAD(+) = 3-hydroxypyruvate + NADH + H(+). It carries out the reaction (R)-glycerate + NADP(+) = 3-hydroxypyruvate + NADPH + H(+). Catalyzes the NADPH-dependent reduction of glyoxylate and hydroxypyruvate into glycolate and glycerate, respectively. The chain is Glyoxylate/hydroxypyruvate reductase B from Shigella boydii serotype 18 (strain CDC 3083-94 / BS512).